A 479-amino-acid polypeptide reads, in one-letter code: ATP synthase subunit beta (479 aa).

ATP is bound at residue 153 to 160 (GGAGVGKT).

It belongs to the ATPase alpha/beta chains family. F-type ATPases have 2 components, CF(1) - the catalytic core - and CF(0) - the membrane proton channel. CF(1) has five subunits: alpha(3), beta(3), gamma(1), delta(1), epsilon(1). CF(0) has three main subunits: a(1), b(2) and c(9-12). The alpha and beta chains form an alternating ring which encloses part of the gamma chain. CF(1) is attached to CF(0) by a central stalk formed by the gamma and epsilon chains, while a peripheral stalk is formed by the delta and b chains.

The protein localises to the cell membrane. It catalyses the reaction ATP + H2O + 4 H(+)(in) = ADP + phosphate + 5 H(+)(out). With respect to regulation, increases 2-fold following exposure to low pH. Produces ATP from ADP in the presence of a proton gradient across the membrane. The catalytic sites are hosted primarily by the beta subunits. The chain is ATP synthase subunit beta from Lactobacillus acidophilus (strain ATCC 700396 / NCK56 / N2 / NCFM).